The primary structure comprises 250 residues: Probable aquaporin TIP-type (250 aa).

The next 2 membrane-spanning stretches (helical) occupy residues 22 to 42 (AGLAEFISTFIFVFAGSGSGI) and 56 to 76 (AGLISASIAHAFALFVAVSVG). The short motif at 85 to 87 (NPA) is the NPA 1 element. 3 consecutive transmembrane segments (helical) span residues 104 to 124 (IVYIIAQLLGSIVASALLVFV), 138 to 158 (VGVGPALVLEIVMTFGLVYTV), and 170 to 190 (IGIIAPIAIGFIVGANILVGG). The NPA 2 signature appears at 198-200 (NPA). Residues 218-238 (YWAGPLIGGGIAGLVYEVLFI) form a helical membrane-spanning segment.

The protein belongs to the MIP/aquaporin (TC 1.A.8) family. TIP (TC 1.A.8.10) subfamily.

The protein localises to the membrane. In terms of biological role, aquaporins facilitate the transport of water and small neutral solutes across cell membranes. May have a role in buffering osmotic fluctations in the highly compartmented vacuole of arbuscule cells. In Medicago truncatula (Barrel medic), this protein is Probable aquaporin TIP-type (AQP1).